A 293-amino-acid chain; its full sequence is Mitochondrial glycine transporter (293 aa).

Solcar repeat units follow at residues 6–85 (GGVP…SRSA), 102–186 (LQSY…AKEM), and 208–291 (ASAM…LLKL). Transmembrane regions (helical) follow at residues 12-37 (LVSG…TRLQ), 60-86 (GTLP…RSAL), 108-133 (LLTG…VRYE), 161-184 (GAAA…EQAK), 212-238 (VNGV…KTRM), and 266-284 (GLSL…AWGI).

The protein belongs to the mitochondrial carrier (TC 2.A.29) family. SLC25A38 subfamily.

It localises to the mitochondrion inner membrane. It catalyses the reaction glycine(in) = glycine(out). Its function is as follows. Mitochondrial glycine transporter that imports glycine into the mitochondrial matrix. Plays an important role in providing glycine for the first enzymatic step in heme biosynthesis, the condensation of glycine with succinyl-CoA to produce 5-aminolevulinate (ALA) in the mitochondrial matrix. The polypeptide is Mitochondrial glycine transporter (Eremothecium gossypii (strain ATCC 10895 / CBS 109.51 / FGSC 9923 / NRRL Y-1056) (Yeast)).